We begin with the raw amino-acid sequence, 163 residues long: Lipoprotein signal peptidase (163 aa).

Helical transmembrane passes span 8–28 (FFLLGLILTVGIDQAVKYWVM), 61–81 (FSHWGLIFLTLIILIFLLWLW), and 93–113 (FGFTLIIGGAIGNLIDRICFY). Active-site residues include aspartate 117 and aspartate 136. A helical membrane pass occupies residues 128–148 (YFAVFNLADTFITLGVIAIII).

The protein belongs to the peptidase A8 family.

Its subcellular location is the cell inner membrane. The catalysed reaction is Release of signal peptides from bacterial membrane prolipoproteins. Hydrolyzes -Xaa-Yaa-Zaa-|-(S,diacylglyceryl)Cys-, in which Xaa is hydrophobic (preferably Leu), and Yaa (Ala or Ser) and Zaa (Gly or Ala) have small, neutral side chains.. The protein operates within protein modification; lipoprotein biosynthesis (signal peptide cleavage). Its function is as follows. This protein specifically catalyzes the removal of signal peptides from prolipoproteins. The sequence is that of Lipoprotein signal peptidase from Bartonella henselae (strain ATCC 49882 / DSM 28221 / CCUG 30454 / Houston 1) (Rochalimaea henselae).